The chain runs to 187 residues: Tetratricopeptide repeat protein 36 (187 aa).

3 TPR repeats span residues 47-80 (VKDL…LPQR), 82-114 (SAYN…SNGK), and 119-152 (CQAL…GSEF).

It belongs to the TTC36 family.

This chain is Tetratricopeptide repeat protein 36 (ttc36), found in Danio rerio (Zebrafish).